A 165-amino-acid chain; its full sequence is Lipoprotein signal peptidase (165 aa).

4 helical membrane-spanning segments follow: residues 7–27 (YFSS…LVLL), 46–66 (AVTS…FSFL), 72–92 (WQRY…IYLL), and 100–120 (LFCW…IDRV). Residues D127 and D145 contribute to the active site. The chain crosses the membrane as a helical span at residues 136–156 (WHWPAFNIADSAICIGAVLFI).

This sequence belongs to the peptidase A8 family.

The protein localises to the cell inner membrane. It catalyses the reaction Release of signal peptides from bacterial membrane prolipoproteins. Hydrolyzes -Xaa-Yaa-Zaa-|-(S,diacylglyceryl)Cys-, in which Xaa is hydrophobic (preferably Leu), and Yaa (Ala or Ser) and Zaa (Gly or Ala) have small, neutral side chains.. It functions in the pathway protein modification; lipoprotein biosynthesis (signal peptide cleavage). This protein specifically catalyzes the removal of signal peptides from prolipoproteins. The sequence is that of Lipoprotein signal peptidase from Janthinobacterium sp. (strain Marseille) (Minibacterium massiliensis).